Here is a 424-residue protein sequence, read N- to C-terminus: MIVKKISKLNEKELDIILNRNKTNISGILPTVSEILENVQKNGDNALKEYTKKFDGVDIDNFKVSTEEIDKAYDKIDSKVVESLEKAYENIREFHEIQFKNLNEWEIDKKGIKAGQIIRPVEKAGCYVPGGRAFYPSTVLMTVTPAKVAGVKEVIVTSPPNGTEGNPATLVASDIAKADGIYKIGGAQAIGALAYGTKSIPKVDIIVGPGNIFVTAAKKLVYGEVSIDFPAGPSEVLIMCDESSNEEYVAMDFLAQAEHDPNASCIITVTSEKKAEKIKERILMEIKTAKRTEIIEKSILNSAIVIGSIDECIELSNSYAPEHLEIMTKNPREVLKSIENAGSIFLGNYAPVPVGDYASGTNHVLPTSACAKMYSGLSVETFIKKPTVQELTKEGLLGISDIVTTLAEAEGLFNHSEAVKRRLN.

NAD(+)-binding residues include tyrosine 127, glutamine 188, and asparagine 211. Substrate is bound by residues serine 234, glutamine 256, and histidine 259. Zn(2+) contacts are provided by glutamine 256 and histidine 259. Catalysis depends on proton acceptor residues glutamate 322 and histidine 323. 4 residues coordinate substrate: histidine 323, aspartate 356, glutamate 410, and histidine 415. Zn(2+) is bound at residue aspartate 356. Histidine 415 serves as a coordination point for Zn(2+).

This sequence belongs to the histidinol dehydrogenase family. The cofactor is Zn(2+).

It catalyses the reaction L-histidinol + 2 NAD(+) + H2O = L-histidine + 2 NADH + 3 H(+). Its pathway is amino-acid biosynthesis; L-histidine biosynthesis; L-histidine from 5-phospho-alpha-D-ribose 1-diphosphate: step 9/9. Its function is as follows. Catalyzes the sequential NAD-dependent oxidations of L-histidinol to L-histidinaldehyde and then to L-histidine. In Methanococcus maripaludis (strain DSM 14266 / JCM 13030 / NBRC 101832 / S2 / LL), this protein is Histidinol dehydrogenase.